The chain runs to 353 residues: Uroporphyrinogen decarboxylase (353 aa).

Residues 27 to 31 (RQAGR), Phe46, Asp76, Tyr152, Ser207, and His321 contribute to the substrate site.

Belongs to the uroporphyrinogen decarboxylase family. Homodimer.

It localises to the cytoplasm. The enzyme catalyses uroporphyrinogen III + 4 H(+) = coproporphyrinogen III + 4 CO2. The protein operates within porphyrin-containing compound metabolism; protoporphyrin-IX biosynthesis; coproporphyrinogen-III from 5-aminolevulinate: step 4/4. In terms of biological role, catalyzes the decarboxylation of four acetate groups of uroporphyrinogen-III to yield coproporphyrinogen-III. This is Uroporphyrinogen decarboxylase from Listeria monocytogenes serotype 4b (strain F2365).